Consider the following 461-residue polypeptide: Photosystem II CP43 reaction center protein (461 aa).

A propeptide spanning residues 1-2 (ME) is cleaved from the precursor. At T3 the chain carries N-acetylthreonine. T3 bears the Phosphothreonine mark. A run of 5 helical transmembrane segments spans residues 57–81 (LFEV…PHLA), 122–143 (LIGP…KDKS), 166–188 (KSVY…RKIT), 243–263 (KPFA…LSYS), and 279–300 (WFNN…ASQA). A [CaMn4O5] cluster-binding site is contributed by E355. A helical transmembrane segment spans residues 435–459 (RARAAAAGFEKGIDRDTEPVLSMTP).

It belongs to the PsbB/PsbC family. PsbC subfamily. PSII is composed of 1 copy each of membrane proteins PsbA, PsbB, PsbC, PsbD, PsbE, PsbF, PsbH, PsbI, PsbJ, PsbK, PsbL, PsbM, PsbT, PsbX, PsbY, PsbZ, Psb30/Ycf12, at least 3 peripheral proteins of the oxygen-evolving complex and a large number of cofactors. It forms dimeric complexes. It depends on Binds multiple chlorophylls and provides some of the ligands for the Ca-4Mn-5O cluster of the oxygen-evolving complex. It may also provide a ligand for a Cl- that is required for oxygen evolution. PSII binds additional chlorophylls, carotenoids and specific lipids. as a cofactor.

It is found in the plastid. It localises to the chloroplast thylakoid membrane. Its function is as follows. One of the components of the core complex of photosystem II (PSII). It binds chlorophyll and helps catalyze the primary light-induced photochemical processes of PSII. PSII is a light-driven water:plastoquinone oxidoreductase, using light energy to abstract electrons from H(2)O, generating O(2) and a proton gradient subsequently used for ATP formation. In Psilotum nudum (Whisk fern), this protein is Photosystem II CP43 reaction center protein.